A 238-amino-acid polypeptide reads, in one-letter code: 2,3,4,5-tetrahydropyridine-2,6-dicarboxylate N-acetyltransferase (238 aa).

Belongs to the transferase hexapeptide repeat family. DapH subfamily.

It catalyses the reaction (S)-2,3,4,5-tetrahydrodipicolinate + acetyl-CoA + H2O = L-2-acetamido-6-oxoheptanedioate + CoA. It functions in the pathway amino-acid biosynthesis; L-lysine biosynthesis via DAP pathway; LL-2,6-diaminopimelate from (S)-tetrahydrodipicolinate (acetylase route): step 1/3. In terms of biological role, catalyzes the transfer of an acetyl group from acetyl-CoA to tetrahydrodipicolinate. In Thermotoga neapolitana (strain ATCC 49049 / DSM 4359 / NBRC 107923 / NS-E), this protein is 2,3,4,5-tetrahydropyridine-2,6-dicarboxylate N-acetyltransferase.